The chain runs to 293 residues: Small ribosomal subunit protein uS3 (293 aa).

In terms of domain architecture, KH type-2 spans 39–110; it reads IRREIMKFLK…KISIKIKEVK (72 aa).

Belongs to the universal ribosomal protein uS3 family. As to quaternary structure, part of the 30S ribosomal subunit. Forms a tight complex with proteins S10 and S14.

Binds the lower part of the 30S subunit head. Binds mRNA in the 70S ribosome, positioning it for translation. This is Small ribosomal subunit protein uS3 from Borreliella burgdorferi (strain ATCC 35210 / DSM 4680 / CIP 102532 / B31) (Borrelia burgdorferi).